A 412-amino-acid chain; its full sequence is Putative competence-damage inducible protein (412 aa).

This sequence belongs to the CinA family.

This Bacillus mycoides (strain KBAB4) (Bacillus weihenstephanensis) protein is Putative competence-damage inducible protein.